We begin with the raw amino-acid sequence, 96 residues long: Large ribosomal subunit protein eL14 (96 aa).

Belongs to the eukaryotic ribosomal protein eL14 family.

This Saccharolobus solfataricus (strain ATCC 35092 / DSM 1617 / JCM 11322 / P2) (Sulfolobus solfataricus) protein is Large ribosomal subunit protein eL14.